The following is a 118-amino-acid chain: Putative pterin-4-alpha-carbinolamine dehydratase (118 aa).

Belongs to the pterin-4-alpha-carbinolamine dehydratase family.

It catalyses the reaction (4aS,6R)-4a-hydroxy-L-erythro-5,6,7,8-tetrahydrobiopterin = (6R)-L-erythro-6,7-dihydrobiopterin + H2O. The chain is Putative pterin-4-alpha-carbinolamine dehydratase from Pseudomonas fluorescens (strain ATCC BAA-477 / NRRL B-23932 / Pf-5).